A 191-amino-acid polypeptide reads, in one-letter code: C-type lectin domain family 2 member D (191 aa).

The Cytoplasmic segment spans residues 1 to 38 (MHDSNNVEKDITPSELPANPGCLHSKEHSIKATLIWRL). The helical; Signal-anchor for type II membrane protein transmembrane segment at 39 to 59 (FFLIMFLTIIVCGMVAALSAI) threads the bilayer. Residues 60–191 (RANCHQEPSV…WICSKSDIHV (132 aa)) lie on the Extracellular side of the membrane. Cysteine 75 and cysteine 86 are joined by a disulfide. One can recognise a C-type lectin domain in the interval 82 to 185 (FQRKCFYFSD…HYTERKWICS (104 aa)). Asparagine 95 and asparagine 147 each carry an N-linked (GlcNAc...) asparagine glycan. A disulfide bond links cysteine 103 and cysteine 184.

As to quaternary structure, homodimer; disulfide-linked. N-glycosylated. In terms of tissue distribution, detected in peripheral blood leukocytes, osteoblasts, lymph node, thymus and spleen. Isoform 1, isoform 2 and isoform 4 are expressed in T- and B-lymphocytes, and at lower levels in NK cells. They are also expressed in B-cell lines and LPS-matured monocyte-derived dendritic cells.

The protein localises to the cell membrane. It is found in the endoplasmic reticulum. Its function is as follows. Receptor for KLRB1 that protects target cells against natural killer cell-mediated lysis. Inhibits osteoclast formation. Inhibits bone resorption. Modulates the release of interferon-gamma. Binds high molecular weight sulfated glycosaminoglycans. The chain is C-type lectin domain family 2 member D (CLEC2D) from Homo sapiens (Human).